A 149-amino-acid chain; its full sequence is Transcriptional repressor NrdR (149 aa).

A zinc finger spans residues 3 to 34 (CPYCSYEESKVVDSRSAEDYNAIRRRRECLRC). In terms of domain architecture, ATP-cone spans 49–139 (ILVIKKDLSR…VYRQFKDINT (91 aa)).

It belongs to the NrdR family. The cofactor is Zn(2+).

Functionally, negatively regulates transcription of bacterial ribonucleotide reductase nrd genes and operons by binding to NrdR-boxes. The polypeptide is Transcriptional repressor NrdR (Clostridium perfringens (strain ATCC 13124 / DSM 756 / JCM 1290 / NCIMB 6125 / NCTC 8237 / Type A)).